We begin with the raw amino-acid sequence, 274 residues long: 3-methyl-2-oxobutanoate hydroxymethyltransferase (274 aa).

The Mg(2+) site is built by D50 and D89. Residues 50-51 (DS), D89, and K119 contribute to the 3-methyl-2-oxobutanoate site. Mg(2+) is bound at residue E121. E188 serves as the catalytic Proton acceptor.

The protein belongs to the PanB family. In terms of assembly, homodecamer; pentamer of dimers. Requires Mg(2+) as cofactor.

Its subcellular location is the cytoplasm. The enzyme catalyses 3-methyl-2-oxobutanoate + (6R)-5,10-methylene-5,6,7,8-tetrahydrofolate + H2O = 2-dehydropantoate + (6S)-5,6,7,8-tetrahydrofolate. It participates in cofactor biosynthesis; (R)-pantothenate biosynthesis; (R)-pantoate from 3-methyl-2-oxobutanoate: step 1/2. Functionally, catalyzes the reversible reaction in which hydroxymethyl group from 5,10-methylenetetrahydrofolate is transferred onto alpha-ketoisovalerate to form ketopantoate. This chain is 3-methyl-2-oxobutanoate hydroxymethyltransferase, found in Methylorubrum extorquens (strain PA1) (Methylobacterium extorquens).